A 270-amino-acid polypeptide reads, in one-letter code: Orotidine 5'-phosphate decarboxylase (270 aa).

Lys89 (proton donor) is an active-site residue.

Belongs to the OMP decarboxylase family. Type 2 subfamily.

It catalyses the reaction orotidine 5'-phosphate + H(+) = UMP + CO2. Its pathway is pyrimidine metabolism; UMP biosynthesis via de novo pathway; UMP from orotate: step 2/2. This is Orotidine 5'-phosphate decarboxylase from Dehalococcoides mccartyi (strain ATCC BAA-2100 / JCM 16839 / KCTC 5957 / BAV1).